Here is a 250-residue protein sequence, read N- to C-terminus: Triosephosphate isomerase (250 aa).

9 to 11 (NWK) lines the substrate pocket. Catalysis depends on His95, which acts as the Electrophile. Glu167 functions as the Proton acceptor in the catalytic mechanism. Substrate-binding positions include Gly173, Ser213, and 234-235 (GG).

The protein belongs to the triosephosphate isomerase family. In terms of assembly, homodimer.

It is found in the cytoplasm. It catalyses the reaction D-glyceraldehyde 3-phosphate = dihydroxyacetone phosphate. It functions in the pathway carbohydrate biosynthesis; gluconeogenesis. It participates in carbohydrate degradation; glycolysis; D-glyceraldehyde 3-phosphate from glycerone phosphate: step 1/1. Its function is as follows. Involved in the gluconeogenesis. Catalyzes stereospecifically the conversion of dihydroxyacetone phosphate (DHAP) to D-glyceraldehyde-3-phosphate (G3P). The sequence is that of Triosephosphate isomerase from Flavobacterium johnsoniae (strain ATCC 17061 / DSM 2064 / JCM 8514 / BCRC 14874 / CCUG 350202 / NBRC 14942 / NCIMB 11054 / UW101) (Cytophaga johnsonae).